Consider the following 1098-residue polypeptide: Ran-binding protein 16 (1098 aa).

Belongs to the exportin family. In terms of assembly, binds to nucleoporins and the GTP-bound form of Ran.

The protein localises to the cytoplasm. It is found in the nucleus. Its function is as follows. May function as a nuclear transport receptor. The sequence is that of Ran-binding protein 16 (Ranbp16) from Drosophila melanogaster (Fruit fly).